The following is a 395-amino-acid chain: Succinyl-diaminopimelate desuccinylase (395 aa).

H74 is a binding site for Zn(2+). Residue D76 is part of the active site. Zn(2+) is bound at residue D107. E141 (proton acceptor) is an active-site residue. Zn(2+) is bound by residues E142, E170, and H368.

It belongs to the peptidase M20A family. DapE subfamily. Homodimer. Zn(2+) serves as cofactor. Co(2+) is required as a cofactor.

The enzyme catalyses N-succinyl-(2S,6S)-2,6-diaminopimelate + H2O = (2S,6S)-2,6-diaminopimelate + succinate. It participates in amino-acid biosynthesis; L-lysine biosynthesis via DAP pathway; LL-2,6-diaminopimelate from (S)-tetrahydrodipicolinate (succinylase route): step 3/3. Catalyzes the hydrolysis of N-succinyl-L,L-diaminopimelic acid (SDAP), forming succinate and LL-2,6-diaminopimelate (DAP), an intermediate involved in the bacterial biosynthesis of lysine and meso-diaminopimelic acid, an essential component of bacterial cell walls. The polypeptide is Succinyl-diaminopimelate desuccinylase (Chelativorans sp. (strain BNC1)).